A 490-amino-acid chain; its full sequence is Doublesex- and mab-3-related transcription factor A1 (490 aa).

Residues 1 to 13 show a composition bias toward basic and acidic residues; sequence MERLPHGRRDRSG. The segment at 1 to 31 is disordered; the sequence is MERLPHGRRDRSGGCRPHLAPGRAAAPASAA. Residues 20–31 are compositionally biased toward low complexity; sequence APGRAAAPASAA. The segment at residues 86 to 133 is a DNA-binding region (DM); that stretch reads CARCRNHGVVSALKGHKRFCRWRDCACAKCTLIAERQRVMAAQVALRR. Disordered regions lie at residues 152 to 171 and 207 to 289; these read GSSGSGAQASGGSGRTESPQ and DRKQ…DLES. The segment covering 207-216 has biased composition (basic and acidic residues); the sequence is DRKQEPKQRN. 2 stretches are compositionally biased toward polar residues: residues 217-242 and 269-289; these read CESCQSRQEEPVSNTHHHSLGSSKGN and PTDQSGGEDSPRSFSSSDLES. Residues 314–349 enclose the DMA domain; the sequence is RDPLGILTRIFPGYKHSRLEGILQFCKGDVVQAIEQ.

Belongs to the DMRT family. As to expression, widely expressed, with highest levels in ovary, testis, epididymis, preputial gland, vomeronasal organ, liver, salivary glands and heart. Also expressed throughout the brain with highest levels in the olfactory bulbs and medulla. Detected at similar levels in gonads of both sexes.

It localises to the nucleus. The protein is Doublesex- and mab-3-related transcription factor A1 (Dmrta1) of Mus musculus (Mouse).